The primary structure comprises 436 residues: Histidinol dehydrogenase (436 aa).

Substrate-binding residues include Ser-242, Gln-264, and His-267. Zn(2+)-binding residues include Gln-264 and His-267. Catalysis depends on proton acceptor residues Glu-332 and His-333. His-333, Asp-366, Glu-420, and His-425 together coordinate substrate. Asp-366 contacts Zn(2+). His-425 lines the Zn(2+) pocket.

It belongs to the histidinol dehydrogenase family. The cofactor is Zn(2+).

The catalysed reaction is L-histidinol + 2 NAD(+) + H2O = L-histidine + 2 NADH + 3 H(+). It participates in amino-acid biosynthesis; L-histidine biosynthesis; L-histidine from 5-phospho-alpha-D-ribose 1-diphosphate: step 9/9. Functionally, catalyzes the sequential NAD-dependent oxidations of L-histidinol to L-histidinaldehyde and then to L-histidine. The sequence is that of Histidinol dehydrogenase from Nitratidesulfovibrio vulgaris (strain ATCC 29579 / DSM 644 / CCUG 34227 / NCIMB 8303 / VKM B-1760 / Hildenborough) (Desulfovibrio vulgaris).